The sequence spans 182 residues: uncharacterized protein (182 aa).

In terms of domain architecture, Nudix hydrolase spans 36–164 (LRHRATYIVV…TPDSLKALSL (129 aa)). A Nudix box motif is present at residues 73–95 (GGVVQSGENYLESARREAEEELG). 2 residues coordinate Mg(2+): glutamate 89 and glutamate 93.

It belongs to the Nudix hydrolase family. Requires Mg(2+) as cofactor.

This is an uncharacterized protein from Yersinia pestis.